We begin with the raw amino-acid sequence, 482 residues long: Uric acid transporter UacT (482 aa).

Residues 1–29 lie on the Cytoplasmic side of the membrane; the sequence is MSAIDSQLPSSSGQDRPTDEVDRILSPGK. The chain crosses the membrane as a helical span at residues 30–50; the sequence is LIILGLQHVLVMYAGAVAVPL. At 51 to 62 the chain is on the periplasmic side; the sequence is MIGDRLGLSKEA. The chain crosses the membrane as a helical span at residues 63-83; the sequence is IAMLISSDLFCCGIVTLLQCI. Residues 84–92 are Cytoplasmic-facing; the sequence is GIGRFMGIR. Residues 93-113 form a helical membrane-spanning segment; the sequence is LPVIMSVTFAAVTPMIAIGMN. Over 114-115 the chain is Periplasmic; that stretch reads PD. The chain crosses the membrane as a helical span at residues 116 to 136; that stretch reads IGLLGIFGATIAAGFITTLLA. Over 137-142 the chain is Cytoplasmic; the sequence is PLIGRL. The chain crosses the membrane as a helical span at residues 143-163; the sequence is MPLFPPLVTGVVITSIGLSII. Over 164–178 the chain is Periplasmic; the sequence is QVGIDWAAGGKGNPQ. A helical membrane pass occupies residues 179-199; that stretch reads YGNPVYLGISFAVLIFILLIT. Over 200 to 204 the chain is Cytoplasmic; sequence RYAKG. Residues 205 to 225 traverse the membrane as a helical segment; sequence FMSNVAVLLGIVFGFLLSWMM. Over 226–261 the chain is Periplasmic; the sequence is NEVNLSGLHDASWFAIVTPMSFGMPIFDPVSILTMT. A helical membrane pass occupies residues 262 to 282; it reads AVLIIVFIESMGMFLALGEIV. Over 283–337 the chain is Cytoplasmic; the sequence is GRKLSSHDIIRGLRVDGVGTMIGGTFNSFPHTSFSQNVGLVSVTRVHSRWVCISS. A helical membrane pass occupies residues 338–358; it reads GIILILFGMVPKMAVLVASIP. Position 359 (glutamine 359) is a topological domain, periplasmic. A helical transmembrane segment spans residues 360-380; the sequence is FVLGGAGLVMFGMVLATGIRI. Over 381 to 392 the chain is Cytoplasmic; that stretch reads LSRCNYTTNRYN. The helical transmembrane segment at 393–413 threads the bilayer; sequence LYIVAISLGVGMTPTLSHDFF. Topologically, residues 414 to 421 are periplasmic; sequence SKLPAVLQ. A helical transmembrane segment spans residues 422–442; it reads PLLHSGIMLATLSAVVLNVFF. The Cytoplasmic portion of the chain corresponds to 443-482; that stretch reads NGYQHHADLVKESVSDKDLKVRTVRMWLLMRKLKKNEHGE.

Belongs to the nucleobase:cation symporter-2 (NCS2) (TC 2.A.40) family.

It localises to the cell inner membrane. Inhibited in the presence of the protonophore carbonyl cyanide m-chlorophenyl hydrazone. Proton-dependent high-capacity transporter for uric acid. Also shows a low capacity for transport of xanthine at 37 degrees Celsius but not at 25 degrees Celsius. The protein is Uric acid transporter UacT (uacT) of Escherichia coli (strain K12).